The following is a 377-amino-acid chain: Sodium-dependent organic anion transporter (377 aa).

Residues 1–29 are Extracellular-facing; the sequence is MRANCSSSSACPANSSEEELPVGLEVHGN. An N-linked (GlcNAc...) asparagine glycan is attached at Asn-4. A helical membrane pass occupies residues 30–50; the sequence is LELVFTVVSTVMMGLLMFSLG. At 51–67 the chain is on the cytoplasmic side; that stretch reads CSVEIRKLWSHIRRPWG. Residues 68–88 form a helical membrane-spanning segment; it reads IAVGLLCQFGLMPFTAYLLAI. Over 89 to 97 the chain is Extracellular; it reads SFSLKPVQA. A helical membrane pass occupies residues 98–118; the sequence is IAVLIMGCCPGGTISNIFTFW. The Cytoplasmic portion of the chain corresponds to 119-133; sequence VDGDMDLSISMTTCS. A helical transmembrane segment spans residues 134-154; it reads TVAALGMMPLCIYLYTWSWSL. Residues 155–159 are Extracellular-facing; it reads QQNLT. Asn-157 is a glycosylation site (N-linked (GlcNAc...) asparagine). The helical transmembrane segment at 160–180 threads the bilayer; the sequence is IPYQNIGITLVCLTIPVAFGV. Residues 181–195 are Cytoplasmic-facing; it reads YVNYRWPKQSKIILK. Residues 196–216 form a helical membrane-spanning segment; that stretch reads IGAVVGGVLLLVVAVAGVVLA. At 217–226 the chain is on the extracellular side; it reads KGSWNSDITL. The helical transmembrane segment at 227-247 threads the bilayer; the sequence is LTISFIFPLIGHVTGFLLALF. Over 248-266 the chain is Cytoplasmic; it reads THQSWQRCRTISLETGAQN. A helical membrane pass occupies residues 267–285; sequence IQMCITMLQLSFTAEHLVQ. The Extracellular portion of the chain corresponds to 286–290; sequence MLSFP. The chain crosses the membrane as a helical span at residues 291–311; sequence LAYGLFQLIDGFLIVAAYQTY. The Cytoplasmic segment spans residues 312 to 377; sequence KRRLKNKHGK…EPVGHITSCE (66 aa).

This sequence belongs to the bile acid:sodium symporter (BASS) (TC 2.A.28) family. Glycosylated. As to expression, highly expressed in testis, placenta and pancreas. Moderately expressed in heart, lung and mammary gland. Weakly expressed in brain, colon, kidney, liver, ovary, prostate, small intestine, spleen and thymus.

The protein resides in the membrane. It carries out the reaction estrone 3-sulfate(out) + 2 Na(+)(out) = estrone 3-sulfate(in) + 2 Na(+)(in). The catalysed reaction is 17beta-estradiol 3-sulfate(out) + 2 Na(+)(out) = 17beta-estradiol 3-sulfate(in) + 2 Na(+)(in). It catalyses the reaction dehydroepiandrosterone 3-sulfate(out) + 2 Na(+)(out) = dehydroepiandrosterone 3-sulfate(in) + 2 Na(+)(in). The enzyme catalyses androst-5-ene-diol 3-sulfate(out) + 2 Na(+)(out) = androst-5-ene-diol 3-sulfate(in) + 2 Na(+)(in). It carries out the reaction pregnenolone sulfate(out) + 2 Na(+)(out) = pregnenolone sulfate(in) + 2 Na(+)(in). The catalysed reaction is taurolithocholate 3-sulfate(out) + 2 Na(+)(out) = taurolithocholate 3-sulfate(in) + 2 Na(+)(in). It catalyses the reaction androsterone 3alpha-sulfate(out) + 2 Na(+)(out) = androsterone 3alpha-sulfate(in) + 2 Na(+)(in). The enzyme catalyses 5alpha-dihydrotestosterone sulfate(out) + 2 Na(+)(out) = 5alpha-dihydrotestosterone sulfate(in) + 2 Na(+)(in). It carries out the reaction 17beta-estradiol 17-sulfate(out) + 2 Na(+)(out) = 17beta-estradiol 17-sulfate(in) + 2 Na(+)(in). The catalysed reaction is 17alpha-hydroxypregnenolone 3-sulfate(out) + 2 Na(+)(out) = 17alpha-hydroxypregnenolone 3-sulfate(in) + 2 Na(+)(in). It catalyses the reaction epiandrosterone 3-sulfate(out) + 2 Na(+)(out) = epiandrosterone 3-sulfate(in) + 2 Na(+)(in). The enzyme catalyses epitestosterone 17-sulfate(out) + 2 Na(+)(out) = epitestosterone 17-sulfate(in) + 2 Na(+)(in). It carries out the reaction testosterone 17-sulfate(out) + 2 Na(+)(out) = testosterone 17-sulfate(in) + 2 Na(+)(in). The catalysed reaction is 16alpha-hydroxydehydroepiandrosterone 3-sulfate(out) + 2 Na(+)(out) = 16alpha-hydroxydehydroepiandrosterone 3-sulfate(in) + 2 Na(+)(in). Functionally, transports sulfoconjugated steroid hormones from the extracellular compartment into the cytosol in a sodium-dependent manner without hydrolysis. Steroid sulfate hormones are commonly considered to be biologically inactive metabolites, that may be activated by steroid sulfatases into free steroids. May play an important role by delivering sulfoconjugated steroids to specific target cells in reproductive organs. May play a role transporting the estriol precursor 16alpha-hydroxydehydroepiandrosterone 3-sulfate (16a-OH-DHEAS) at the fetal blood vessel endothelium. Can also transport other sulfoconjugated molecules such as taurolithocholic acid-3-sulfate and sulfoconjugated pyrenes. The chain is Sodium-dependent organic anion transporter (SLC10A6) from Homo sapiens (Human).